The primary structure comprises 975 residues: Protein HIRA (975 aa).

WD repeat units follow at residues 10 to 50 (RHEG…KDND), 64 to 103 (DHFG…GTSE), 123 to 162 (GHTA…CTAV), 165 to 204 (GHSS…LAHR), 214 to 256 (GSTF…ATFD), 259 to 331 (GHNA…PLFV), and 335 to 374 (FFTQ…LGYR). Residues 418 to 433 (KKVSSVQQFQSPPKVS) are compositionally biased toward low complexity. Disordered stretches follow at residues 418 to 510 (KKVS…RSQN) and 948 to 975 (NVEQ…NGAS). Over residues 435–445 (DAPNPSTSVPN) the composition is skewed to polar residues. The segment covering 478-492 (KQREYRRPDGRKRII) has biased composition (basic and acidic residues). Polar residues predominate over residues 499–510 (PSNQDMSNRSQN). Positions 923 to 954 (ATNRKVQRLLNEFMDLLSEYEAAETNVEQMDV) form a coiled coil.

It belongs to the WD repeat HIR1 family.

The protein resides in the nucleus. In terms of biological role, histone chaperone involved in maintining knox genes silencing throughout leaf development. The sequence is that of Protein HIRA from Oryza sativa subsp. japonica (Rice).